The primary structure comprises 84 residues: Defensin-like protein 140 (84 aa).

The signal sequence occupies residues 1–28 (MSKSLQLIVTVLCIFTILVLGEICLAKG). Intrachain disulfides connect Cys37/Cys81, Cys46/Cys65, Cys51/Cys75, and Cys55/Cys77.

This sequence belongs to the DEFL family.

The protein resides in the secreted. In Arabidopsis thaliana (Mouse-ear cress), this protein is Defensin-like protein 140 (LCR15).